The chain runs to 433 residues: Putative ankyrin repeat protein R784 (433 aa).

ANK repeat units follow at residues 44-70 (NQNL…KTDV), 71-101 (NGLK…NNDL), 102-131 (LDLH…IVII), 179-205 (FYDS…NQCS), 206-235 (VRQK…RIFS), 237-264 (RRLI…IDLA), 265-294 (QNNF…DIHF), 296-321 (NGEC…NKVY), 322-351 (MSEK…ACMS), and 380-409 (NMRK…KLRE).

This Acanthamoeba polyphaga mimivirus (APMV) protein is Putative ankyrin repeat protein R784.